An 81-amino-acid chain; its full sequence is Small ribosomal subunit protein bS18 (81 aa).

The protein belongs to the bacterial ribosomal protein bS18 family. Part of the 30S ribosomal subunit. Forms a tight heterodimer with protein bS6.

Binds as a heterodimer with protein bS6 to the central domain of the 16S rRNA, where it helps stabilize the platform of the 30S subunit. The sequence is that of Small ribosomal subunit protein bS18 from Leptospira borgpetersenii serovar Hardjo-bovis (strain JB197).